The primary structure comprises 97 residues: Small ribosomal subunit protein bS20 (97 aa).

It belongs to the bacterial ribosomal protein bS20 family.

Its function is as follows. Binds directly to 16S ribosomal RNA. This Prochlorococcus marinus (strain MIT 9301) protein is Small ribosomal subunit protein bS20.